The chain runs to 361 residues: Hydroxyproline O-arabinosyltransferase PLENTY (361 aa).

Residues 13–33 (LLMLLMVLGFFFATYNLVSMI) traverse the membrane as a helical; Signal-anchor segment.

It localises to the golgi apparatus membrane. The catalysed reaction is trans-4-hydroxy-L-prolyl-[protein] + UDP-beta-L-arabinofuranose = O-(beta-L-arabinofuranosyl)-trans-4-hydroxy-L-prolyl-[protein] + UDP + H(+). Its function is as follows. Glycosyltransferase involved in the O-arabinosylation of several proteins including extensins and small signaling peptides. Catalyzes the transfer of the initial L-arabinose to the hydroxyl group of Hyp residues. Probably involved in the arabinosylation of CLAVATA3/ESR-related (CLE) signaling peptides that move from root to shoot, to interact with receptor kinase signaling that regulates nodulation. Involved in long distance nodulation signaling events. Involved in the autoregulation of nodulation (AON), a long distance systemic signaling from root to shoot and back again, which allows legumes to limit the number of root nodules formed based on available nitrogen and previous rhizobial colonization. The polypeptide is Hydroxyproline O-arabinosyltransferase PLENTY (Lotus japonicus (Lotus corniculatus var. japonicus)).